Consider the following 95-residue polypeptide: Small ribosomal subunit protein uS19 (95 aa).

This sequence belongs to the universal ribosomal protein uS19 family.

Functionally, protein S19 forms a complex with S13 that binds strongly to the 16S ribosomal RNA. In Thermosipho melanesiensis (strain DSM 12029 / CIP 104789 / BI429), this protein is Small ribosomal subunit protein uS19.